The primary structure comprises 398 residues: Argininosuccinate synthase (398 aa).

Residues 9–17 (AYSGGVDTS) and Ala-37 each bind ATP. Tyr-88 contributes to the L-citrulline binding site. Gly-118 is a binding site for ATP. Residues Thr-120, Asn-124, and Asp-125 each coordinate L-aspartate. Asn-124 serves as a coordination point for L-citrulline. The L-citrulline site is built by Arg-128, Ser-176, Ser-185, Glu-261, and Tyr-273.

Belongs to the argininosuccinate synthase family. Type 1 subfamily. In terms of assembly, homotetramer.

It localises to the cytoplasm. The enzyme catalyses L-citrulline + L-aspartate + ATP = 2-(N(omega)-L-arginino)succinate + AMP + diphosphate + H(+). The protein operates within amino-acid biosynthesis; L-arginine biosynthesis; L-arginine from L-ornithine and carbamoyl phosphate: step 2/3. This chain is Argininosuccinate synthase, found in Gloeobacter violaceus (strain ATCC 29082 / PCC 7421).